Consider the following 104-residue polypeptide: Naphthalene 1,2-dioxygenase system, ferredoxin component (104 aa).

One can recognise a Rieske domain in the interval 6–101 (IEAVALSDIL…VKIENLRVMI (96 aa)). Residues C45, H47, C64, and H67 each contribute to the [2Fe-2S] cluster site.

Belongs to the bacterial ring-hydroxylating dioxygenase ferredoxin component family. The naphthalene dioxygenase (NDO) multicomponent enzyme system is composed of an electron transfer component and a dioxygenase component (iron sulfur protein (ISP)). The electron transfer component is composed of a ferredoxin reductase (NdoR) and a ferredoxin (NdoA), and the dioxygenase component is formed of a heterohexamer (trimer of heterodimers) of three large alpha subunits (NdoB) and three small beta subunits (NdoC). Requires [2Fe-2S] cluster as cofactor.

The protein operates within aromatic compound metabolism; naphthalene degradation. Its function is as follows. Component of the naphthalene dioxygenase (NDO) multicomponent enzyme system which catalyzes the incorporation of both atoms of molecular oxygen into naphthalene to form cis-(1R,2S)-dihydroxy-1,2-dihydronaphthalene. Functions as an intermediate electron transfer protein via a specific interaction with iron sulfur protein components (ISP) (NdoB and NdoC). Also able to catalyze the cis-dihydroxylation of biphenyl and phenanthrene. The polypeptide is Naphthalene 1,2-dioxygenase system, ferredoxin component (Pseudomonas putida (Arthrobacter siderocapsulatus)).